We begin with the raw amino-acid sequence, 445 residues long: UPF0210 protein SPT_0285 (445 aa).

This sequence belongs to the UPF0210 family. In terms of assembly, homodimer.

The chain is UPF0210 protein SPT_0285 from Streptococcus pneumoniae (strain Taiwan19F-14).